The chain runs to 248 residues: PF03932 family protein CutC (248 aa).

Belongs to the CutC family. Homodimer.

The protein localises to the cytoplasm. The polypeptide is PF03932 family protein CutC (Escherichia coli O45:K1 (strain S88 / ExPEC)).